Reading from the N-terminus, the 531-residue chain is Light-independent protochlorophyllide reductase subunit B (531 aa).

Position 36 (Asp-36) interacts with [4Fe-4S] cluster. The Proton donor role is filled by Asp-287. 422–423 (GL) contacts substrate.

This sequence belongs to the ChlB/BchB/BchZ family. As to quaternary structure, protochlorophyllide reductase is composed of three subunits; BchL, BchN and BchB. Forms a heterotetramer of two BchB and two BchN subunits. It depends on [4Fe-4S] cluster as a cofactor.

It carries out the reaction chlorophyllide a + oxidized 2[4Fe-4S]-[ferredoxin] + 2 ADP + 2 phosphate = protochlorophyllide a + reduced 2[4Fe-4S]-[ferredoxin] + 2 ATP + 2 H2O. The protein operates within porphyrin-containing compound metabolism; bacteriochlorophyll biosynthesis (light-independent). Component of the dark-operative protochlorophyllide reductase (DPOR) that uses Mg-ATP and reduced ferredoxin to reduce ring D of protochlorophyllide (Pchlide) to form chlorophyllide a (Chlide). This reaction is light-independent. The NB-protein (BchN-BchB) is the catalytic component of the complex. The chain is Light-independent protochlorophyllide reductase subunit B from Rhodopseudomonas palustris (strain BisA53).